Here is a 118-residue protein sequence, read N- to C-terminus: Holo-[acyl-carrier-protein] synthase (118 aa).

Mg(2+) contacts are provided by aspartate 8 and glutamate 58.

It belongs to the P-Pant transferase superfamily. AcpS family. Requires Mg(2+) as cofactor.

It localises to the cytoplasm. The catalysed reaction is apo-[ACP] + CoA = holo-[ACP] + adenosine 3',5'-bisphosphate + H(+). Functionally, transfers the 4'-phosphopantetheine moiety from coenzyme A to a Ser of acyl-carrier-protein. The polypeptide is Holo-[acyl-carrier-protein] synthase (Listeria monocytogenes serotype 4b (strain CLIP80459)).